The sequence spans 334 residues: Geminin coiled-coil domain-containing protein 1 (334 aa).

Residues 82-119 are a coiled coil; sequence SQLYRNKQLQDTLVQKEEELARLHEENNHLRQYLNSAL. The segment at 143 to 167 is disordered; the sequence is FRKGKRKSKEQRYSPAEIPHPKNAK.

This sequence belongs to the GEMC1 family. Post-translationally, highly phosphorylated by CDK2; stimulates initiation of DNA replication.

It localises to the nucleus. Functionally, regulator of DNA replication. Promotes initiation of chromosomal DNA replication by mediating TOPBP1- and CDK2-dependent recruitment of CDC45L onto replication origins. In Homo sapiens (Human), this protein is Geminin coiled-coil domain-containing protein 1 (GMNC).